The following is a 407-amino-acid chain: Spore germination protein KC (407 aa).

The first 20 residues, 1–20 (MVRKCLLAVLMLLSVIVLPG), serve as a signal peptide directing secretion. The N-palmitoyl cysteine moiety is linked to residue Cys21. Cys21 carries the S-diacylglycerol cysteine lipid modification.

The protein belongs to the GerABKC lipoprotein family.

The protein localises to the cell membrane. Its function is as follows. Involved in the germination response to the combination of glucose, fructose, L-asparagine, and KCl. This is Spore germination protein KC (gerKC) from Bacillus subtilis (strain 168).